A 193-amino-acid polypeptide reads, in one-letter code: Protein SPEAR3 (193 aa).

Disordered regions lie at residues 1-50 (MGSS…GVAQ) and 85-104 (GYPS…SSPP). Residues 14–26 (SSSSSPTSSSSSP) are compositionally biased toward low complexity. Residues 44-52 (RGLGVAQLE) carry the SPL motif. Low complexity predominate over residues 86 to 101 (YPSIPSSSPSFSYASS). The short motif at 187–193 (LDLELRL) is the EAR element.

Interacts with TPL and the TPR corepressors TPR1, TPR2, TPR3, TPR4, and with the TCP transcription factors TCP2, TCP3, TCP4, TCP5, TCP10, TCP13, TCP17 and TCP24. Interacts with SPL and SPEAR2. Expressed in shoot apical meristem, cotyledons and leaves. Detected at the leaf margins and in the vascular bundles at the base of the leaves.

It localises to the nucleus. Functionally, transcriptional regulator of leaf development. Acts as an adapter-like transcriptional repressor recruiting TPL/TPR corepressors to inhibit the CIN-like TCP transcription factors. This chain is Protein SPEAR3, found in Arabidopsis thaliana (Mouse-ear cress).